A 252-amino-acid chain; its full sequence is Insulin-induced gene 1 protein (252 aa).

At 1–59 (MPRLESGAWSCSCAARARHAARPGEAAPKADAMQSPSPSAGRAEREASGGSATTWRQHL) the chain is on the cytoplasmic side. Residues 22 to 48 (RPGEAAPKADAMQSPSPSAGRAEREAS) are disordered. Residues 60–82 (VQRSVVLFVVGAFMALVLNLLQI) traverse the membrane as a helical segment. The Extracellular segment spans residues 83–101 (QRNVTLFPDEVIATLFSSA). The chain crosses the membrane as a helical span at residues 102-119 (WWVPPCCGTAAAVVGLLY). At 120-134 (PCIDSHLGEPHKFKR) the chain is on the cytoplasmic side. A helical transmembrane segment spans residues 135 to 157 (EWASVMRCIAVFVGINHASAKLD). Residues 158-160 (FAN) are Extracellular-facing. The helical transmembrane segment at 161–179 (NVQLSLTLAALSLGLWWTF) threads the bilayer. Over 180–184 (DRSRS) the chain is Cytoplasmic. The chain crosses the membrane as a helical span at residues 185–206 (GLGLGITIAFVATLITQFLVYN). The Extracellular portion of the chain corresponds to 207–220 (GVYQYTSPDFLYIR). Residues 221–238 (SWLPCIFFSGGVTVGNIG) form a helical membrane-spanning segment. At 239 to 252 (RQLAMGIPEKPHND) the chain is on the cytoplasmic side. The KxHxx motif lies at 246–252 (PEKPHND).

This sequence belongs to the INSIG family. Interacts with SCAP; interaction is direct and only takes place in the presence of sterols; it prevents interaction between SCAP and the coat protein complex II (COPII). Associates with the SCAP-SREBP complex; association is mediated via its interaction with SCAP and only takes place in the presence of sterols.

Its subcellular location is the endoplasmic reticulum membrane. Functionally, oxysterol-binding protein that mediates feedback control of cholesterol synthesis by controlling both endoplasmic reticulum to Golgi transport of SCAP and degradation of HMGCR. Acts as a negative regulator of cholesterol biosynthesis by mediating the retention of the SCAP-SREBP complex in the endoplasmic reticulum, thereby blocking the processing of sterol regulatory element-binding proteins (SREBPs). Binds oxysterol, including 25-hydroxycholesterol, regulating interaction with SCAP and retention of the SCAP-SREBP complex in the endoplasmic reticulum. In presence of oxysterol, interacts with SCAP, retaining the SCAP-SREBP complex in the endoplasmic reticulum, thereby preventing SCAP from escorting SREBPs to the Golgi. Sterol deprivation reduces oxysterol-binding, disrupting the interaction between INSIG1 and SCAP, thereby promoting Golgi transport of the SCAP-SREBP complex, followed by processing and nuclear translocation of SREBPs. Also regulates cholesterol synthesis by regulating degradation of HMGCR. In Gallus gallus (Chicken), this protein is Insulin-induced gene 1 protein.